A 200-amino-acid polypeptide reads, in one-letter code: Imidazoleglycerol-phosphate dehydratase (200 aa).

Belongs to the imidazoleglycerol-phosphate dehydratase family.

It localises to the cytoplasm. It carries out the reaction D-erythro-1-(imidazol-4-yl)glycerol 3-phosphate = 3-(imidazol-4-yl)-2-oxopropyl phosphate + H2O. Its pathway is amino-acid biosynthesis; L-histidine biosynthesis; L-histidine from 5-phospho-alpha-D-ribose 1-diphosphate: step 6/9. The protein is Imidazoleglycerol-phosphate dehydratase of Prosthecochloris aestuarii (strain DSM 271 / SK 413).